The sequence spans 278 residues: MTTRIDIRFAQLKREGRPAFVTFVMAGDPDLATSLQLLKALPTAGADIIEIGMPFTDPMADGPAIQAAGLRALHGGTTLHKTLELVGDFRKDDATTPVVLMGYYNPIYIYGVDAFLADAKAAGVDGLIIVDLPPEEDAELCLPAMKAGLNFIRLATPTTDEKRLPAVLANTSGFVYYVSITGITGSASADSVAVGDAVARIKRHTDLPVCVGFGIRTPEGARAIAAQADGAVVGSALIDALQKTLDTDNRATQATVGAVADLVASLAAGVRGAQQAAE.

Residues E50 and D61 each act as proton acceptor in the active site.

This sequence belongs to the TrpA family. In terms of assembly, tetramer of two alpha and two beta chains.

It carries out the reaction (1S,2R)-1-C-(indol-3-yl)glycerol 3-phosphate + L-serine = D-glyceraldehyde 3-phosphate + L-tryptophan + H2O. It functions in the pathway amino-acid biosynthesis; L-tryptophan biosynthesis; L-tryptophan from chorismate: step 5/5. Its function is as follows. The alpha subunit is responsible for the aldol cleavage of indoleglycerol phosphate to indole and glyceraldehyde 3-phosphate. The chain is Tryptophan synthase alpha chain from Rhodopseudomonas palustris (strain HaA2).